The chain runs to 885 residues: MDIRGRKMKKPPACVQCRKRKIGCDRVKPICGNCMKHNKMDCFYPDVPGQYVPSSSSSSNTRQVANGPYLNSYYASRRVSKETAALLQKNPELASLEQIREYNTRLQLLNAQNQLNNRSSAANATLNQQHTQYIPKSVPSLESKPVTSANESSTPLNWVQGPAIFHMLTSPYTQDEIINHEMNFLKGRLLELQEITGKKITGVNLDLKQDSSAQMQSSHSNRNQEEFLTIKKRKLSEDGVTDGDGKPIPESERRPHLNEFKDLDPQFLDTNKVFNVFNSAISEEGRNRLWLLPKNINKSSIFQIQYLIERDPFLFKFFNDLNILIETQFNGPLHDLVASRNSIERNSGISQILKFPSQSITQTLINKYLSTITETNSILPILKPKRLLPIVEQLFPSNTINKPNSKDFETIFQVFSVTNDQLLNLGFITLCLLILFESLNSTVLIPLRDDEHLQLFNVLFNYLPLLKSNLTTLRFEIEKRSMCNIETLRFISLWKYYQFVMDTSSSSSFVIDYDEDMHMACLLSLNHETQNQSHILTWNFIFKNYCWRHLFLGQLPLLMSEPFTNSTPIIDPLLNNDFELIDFEVNLMKYLQSKDQQLSIDKIIQLIKLLKNKNIEVSQGCLTTPSIINNIMDSLIYRNSMLYLNFYLLLQFETLKNYAKFNEILEDFLELSRETLFFVFSNLANIKFAGHEFTFINKSIVVLQTLVLMLLALYQRSFDSSKRTNDANEISEQTDIHSNNDNSKRIKNKNVIHLIINKIAMLLSDYTKNCKKQNKLIENLIIKIKTISKYIKNLEENKVTTSADSNYSINNGFSGISAEQLIKLNHELSKISESLIKTDFYEQRKNSTVSNGVLGAAAPVDSDANSDTFGLTKENFNEVFEAIRS.

Positions 14 to 42 form a DNA-binding region, zn(2)-C6 fungal-type; sequence CVQCRKRKIGCDRVKPICGNCMKHNKMDC. Residues serine 95 and serine 236 each carry the phosphoserine modification.

In terms of assembly, forms a heteromer with RSC30. Interacts with LDB7 and NPL6. Component of the two forms of the RSC complex composed of at least either RSC1 or RSC2, and ARP7, ARP9, LDB7, NPL6, RSC3, RSC30, RSC4, RSC58, RSC6, RSC8, RSC9, SFH1, STH1, HTL1 and probably RTT102. The complexes interact with histone and histone variant components of centromeric chromatin. Component of a fungal-specific module (HTL1-LDB7-NPL6-RSC3-RSC30) within the RSC complex.

The protein resides in the nucleus. In terms of biological role, component of the chromatin structure-remodeling complex (RSC), which is involved in transcription regulation and nucleosome positioning. RSC is responsible for the transfer of a histone octamer from a nucleosome core particle to naked DNA. The reaction requires ATP and involves an activated RSC-nucleosome intermediate. Remodeling reaction also involves DNA translocation, DNA twist and conformational change. As a reconfigurer of centromeric and flanking nucleosomes, RSC complex is required both for proper kinetochore function in chromosome segregation and, via a PKC1-dependent signaling pathway, for organization of the cellular cytoskeleton. This subunit is required for transcription of ribosomal protein genes and genes involved in the integrity of the cell wall, and also for proper metaphase progression. Together with HTL1, LDB7, NPL6, RSC30 components, defines a fungal-specific module within the RSC complex that plays a role in many cellular functions including the maintenance of cell wall integrity. The protein is Chromatin structure-remodeling complex protein RSC3 (RSC3) of Saccharomyces cerevisiae (strain ATCC 204508 / S288c) (Baker's yeast).